The chain runs to 484 residues: Probable glycine dehydrogenase (decarboxylating) subunit 2 (484 aa).

An N6-(pyridoxal phosphate)lysine modification is found at Lys270.

The protein belongs to the GcvP family. C-terminal subunit subfamily. In terms of assembly, the glycine cleavage system is composed of four proteins: P, T, L and H. In this organism, the P 'protein' is a heterodimer of two subunits. It depends on pyridoxal 5'-phosphate as a cofactor.

It catalyses the reaction N(6)-[(R)-lipoyl]-L-lysyl-[glycine-cleavage complex H protein] + glycine + H(+) = N(6)-[(R)-S(8)-aminomethyldihydrolipoyl]-L-lysyl-[glycine-cleavage complex H protein] + CO2. Functionally, the glycine cleavage system catalyzes the degradation of glycine. The P protein binds the alpha-amino group of glycine through its pyridoxal phosphate cofactor; CO(2) is released and the remaining methylamine moiety is then transferred to the lipoamide cofactor of the H protein. This is Probable glycine dehydrogenase (decarboxylating) subunit 2 from Desulforamulus reducens (strain ATCC BAA-1160 / DSM 100696 / MI-1) (Desulfotomaculum reducens).